A 164-amino-acid polypeptide reads, in one-letter code: Methanogen homoaconitase small subunit 2 (164 aa).

The YLRT signature appears at 26–29 (YLRT).

This sequence belongs to the LeuD family. LeuD type 2 subfamily. As to quaternary structure, heterotetramer of 2 HacA and 2 HacB proteins. Cannot form a complex with LeuC.

It catalyses the reaction (2R)-homocitrate = (2R,3S)-homoisocitrate. The enzyme catalyses (2R)-homocitrate = cis-homoaconitate + H2O. The catalysed reaction is (2R,3S)-homoisocitrate = cis-homoaconitate + H2O. It carries out the reaction cis-(homo)2aconitate + H2O = (2R,3S)-iso(homo)2citrate. It catalyses the reaction cis-(homo)3aconitate + H2O = (2R,3S)-iso(homo)3citrate. It functions in the pathway organic acid metabolism; 2-oxosuberate biosynthesis. In terms of biological role, component of a hydro-lyase with broad substrate specificity for cis-unsaturated tricarboxylic acids. Catalyzes both the reversible dehydration of (R)-homocitrate ((R)-2-hydroxybutane-1,2,4-tricarboxylate) to produce cis-homoaconitate ((Z)-but-1-ene-1,2,4-tricarboxylate), and its hydration to homoisocitrate ((1R,2S)-1-hydroxybutane-1,2,4-tricarboxylate). Is also able to hydrate the analogous longer chain substrates cis-homo(2)-aconitate, cis-homo(3)-aconitate. These reactions are part of the biosynthesis pathway of coenzyme B. The sequence is that of Methanogen homoaconitase small subunit 2 (hacB2) from Methanosarcina acetivorans (strain ATCC 35395 / DSM 2834 / JCM 12185 / C2A).